We begin with the raw amino-acid sequence, 447 residues long: MTTILKHLPVGQRIGIAFSGGLDTSAALLWMRQKGAVPYAYTANLGQPDEDDYDAIPRRAMEYGAENARLIDCRKQLVAEGIAAIQCGAFHNTTGGLTYFNTTPLGRAVTGTMLVAAMKEDGVNIWGDGSTYKGNDIERFYRYGLLTNAELQIYKPWLDTDFIDELGGRHEMSEFMIACGFDYKMSVEKAYSTDSNMLGATHEAKDLEFLNSSVKIVNPIMGVKFWDENVKIPAEEVTVRFEQGHPVALNGKTFSDDVELMLEANRIGGRHGLGMSDQIENRIIEAKSRGIYEAPGMALLHIAYERLLTGIHNEDTIEQYHAHGRQLGRLLYQGRWFDSQALMLRDGLQRWVASQITGEVTLELRRGNDYSILNTVSDNLTYKPERLTMEKGDSVFSPDDRIGQLTMRNLDITDTREKLFGYAQSGLLSASSATGLPQVENLENKGK.

ATP-binding positions include 17–25 (AFSGGLDTS) and Ala-43. Tyr-99 contacts L-citrulline. Residues Gly-129 and Thr-131 each contribute to the ATP site. L-aspartate-binding residues include Thr-131, Asn-135, and Asp-136. Asn-135 is an L-citrulline binding site. Position 136 (Asp-136) interacts with ATP. Arg-139 and Ser-192 together coordinate L-citrulline. Asp-194 contributes to the ATP binding site. L-citrulline-binding residues include Thr-201, Glu-203, and Glu-280.

It belongs to the argininosuccinate synthase family. Type 2 subfamily. Homotetramer.

Its subcellular location is the cytoplasm. The enzyme catalyses L-citrulline + L-aspartate + ATP = 2-(N(omega)-L-arginino)succinate + AMP + diphosphate + H(+). It participates in amino-acid biosynthesis; L-arginine biosynthesis; L-arginine from L-ornithine and carbamoyl phosphate: step 2/3. The protein is Argininosuccinate synthase of Citrobacter koseri (strain ATCC BAA-895 / CDC 4225-83 / SGSC4696).